The primary structure comprises 503 residues: Lysine--tRNA ligase (503 aa).

Residues glutamate 413 and glutamate 420 each coordinate Mg(2+).

This sequence belongs to the class-II aminoacyl-tRNA synthetase family. In terms of assembly, homodimer. Mg(2+) serves as cofactor.

Its subcellular location is the cytoplasm. The enzyme catalyses tRNA(Lys) + L-lysine + ATP = L-lysyl-tRNA(Lys) + AMP + diphosphate. This chain is Lysine--tRNA ligase, found in Actinobacillus succinogenes (strain ATCC 55618 / DSM 22257 / CCUG 43843 / 130Z).